A 382-amino-acid chain; its full sequence is uncharacterized protein (382 aa).

12 consecutive transmembrane segments (helical) span residues 8-28 (VLLL…LNTL), 39-61 (PTWQ…TLLT), 75-95 (YLAS…VGFW), 102-122 (FIAG…LMCS), 131-151 (LLAA…LMIS), 157-177 (LMSV…PLLF), 204-224 (LGVN…GLMP), 236-256 (GIGF…WPIG), 265-284 (LLVL…AMLG), 289-311 (APAL…AWAC), 325-345 (ALLL…AMLM), and 349-369 (SDNL…LMLL).

Belongs to the major facilitator superfamily. YcaD (TC 2.A.1.26) family.

It localises to the cell inner membrane. This is an uncharacterized protein from Enterobacter sp. (strain 638).